The sequence spans 96 residues: Co-chaperonin GroES (96 aa).

Belongs to the GroES chaperonin family. As to quaternary structure, heptamer of 7 subunits arranged in a ring. Interacts with the chaperonin GroEL.

The protein localises to the cytoplasm. Together with the chaperonin GroEL, plays an essential role in assisting protein folding. The GroEL-GroES system forms a nano-cage that allows encapsulation of the non-native substrate proteins and provides a physical environment optimized to promote and accelerate protein folding. GroES binds to the apical surface of the GroEL ring, thereby capping the opening of the GroEL channel. This is Co-chaperonin GroES from Wolbachia pipientis wMel.